A 2321-amino-acid polypeptide reads, in one-letter code: Neurogenic locus notch homolog protein 3 (2321 aa).

A compositionally biased stretch (basic residues) spans 1–14 (MGPGARGRRRRRRP). Positions 1–26 (MGPGARGRRRRRRPMSPPPPPPPVRA) are disordered. A signal peptide spans 1-39 (MGPGARGRRRRRRPMSPPPPPPPVRALPLLLLLAGPGAA). Pro residues predominate over residues 15–25 (MSPPPPPPPVR). EGF-like domains lie at 40-77 (APPC…ERCQ), 78-118 (LEDP…PDCS), and 119-156 (LPDP…RSCR). Residues 40 to 1643 (APPCLDGSPC…LEPPEPSVPL (1604 aa)) lie on the Extracellular side of the membrane. Cystine bridges form between Cys-43–Cys-55, Cys-49–Cys-65, Cys-67–Cys-76, Cys-82–Cys-93, Cys-87–Cys-106, Cys-108–Cys-117, Cys-123–Cys-134, Cys-128–Cys-144, Cys-146–Cys-155, Cys-162–Cys-174, Cys-168–Cys-183, Cys-185–Cys-194, Cys-201–Cys-212, Cys-206–Cys-222, Cys-224–Cys-233, Cys-240–Cys-251, Cys-245–Cys-260, Cys-262–Cys-271, Cys-278–Cys-291, Cys-285–Cys-300, Cys-302–Cys-311, Cys-318–Cys-329, Cys-323–Cys-338, Cys-340–Cys-349, Cys-355–Cys-366, Cys-360–Cys-377, Cys-379–Cys-388, Cys-395–Cys-408, Cys-402–Cys-417, Cys-419–Cys-428, Cys-435–Cys-446, Cys-440–Cys-455, Cys-457–Cys-466, Cys-473–Cys-484, Cys-478–Cys-493, Cys-495–Cys-504, Cys-511–Cys-522, Cys-516–Cys-531, Cys-533–Cys-542, Cys-549–Cys-559, Cys-554–Cys-568, Cys-570–Cys-579, Cys-586–Cys-597, Cys-591–Cys-606, Cys-608–Cys-617, Cys-624–Cys-634, Cys-629–Cys-643, Cys-645–Cys-654, Cys-661–Cys-672, Cys-666–Cys-681, Cys-683–Cys-692, Cys-699–Cys-709, Cys-704–Cys-718, Cys-720–Cys-729, Cys-738–Cys-749, Cys-743–Cys-758, Cys-760–Cys-769, Cys-775–Cys-786, Cys-780–Cys-796, Cys-798–Cys-807, Cys-814–Cys-826, Cys-820–Cys-835, Cys-837–Cys-846, Cys-853–Cys-864, Cys-858–Cys-873, Cys-875–Cys-884, Cys-891–Cys-901, Cys-896–Cys-910, Cys-912–Cys-921, Cys-928–Cys-939, Cys-933–Cys-948, Cys-950–Cys-959, Cys-966–Cys-977, Cys-971–Cys-986, Cys-988–Cys-997, Cys-1004–Cys-1015, Cys-1009–Cys-1022, Cys-1024–Cys-1033, Cys-1040–Cys-1061, Cys-1055–Cys-1070, Cys-1072–Cys-1081, Cys-1088–Cys-1099, Cys-1093–Cys-1108, Cys-1110–Cys-1119, Cys-1126–Cys-1137, Cys-1131–Cys-1146, Cys-1148–Cys-1157, Cys-1164–Cys-1182, Cys-1176–Cys-1191, Cys-1193–Cys-1202, Cys-1209–Cys-1222, Cys-1214–Cys-1232, Cys-1234–Cys-1243, Cys-1250–Cys-1261, Cys-1255–Cys-1275, Cys-1277–Cys-1286, Cys-1293–Cys-1304, Cys-1298–Cys-1313, and Cys-1315–Cys-1324. In terms of domain architecture, EGF-like 4; calcium-binding spans 158-195 (DVDECRVGEPCRHGGTCLNTPGSFRCQCPAGYTGPLCE). One can recognise an EGF-like 5 domain in the interval 197-234 (PAVPCAPSPCRNGGTCRQSGDLTYDCACLPGFEGQNCE). The EGF-like 6; calcium-binding domain maps to 236–272 (NVDDCPGHRCLNGGTCVDGVNTYNCQCPPEWTGQFCT). The 39-residue stretch at 274–312 (DVDECQLQPNACHNGGTCFNTLGGHSCVCVNGWTGESCS) folds into the EGF-like 7 domain. The region spanning 314–350 (NIDDCATAVCFHGATCHDRVASFYCACPMGKTGLLCH) is the EGF-like 8; calcium-binding domain. An EGF-like 9 domain is found at 351–389 (LDDACVSNPCHEDAICDTNPVNGRAICTCPPGFTGGACD). The region spanning 391-429 (DVDECSIGANPCEHLGRCVNTQGSFLCQCGRGYTGPRCE) is the EGF-like 10; calcium-binding domain. Residues 431–467 (DVNECLSGPCRNQATCLDRIGQFTCICMAGFTGTYCE) form the EGF-like 11; calcium-binding domain. One can recognise an EGF-like 12; calcium-binding domain in the interval 469 to 505 (DIDECQSSPCVNGGVCKDRVNGFSCTCPSGFSGSTCQ). An EGF-like 13; calcium-binding domain is found at 507-543 (DVDECASTPCRNGAKCVDQPDGYECRCAEGFEGTLCD). Residues 545–580 (NVDDCSPDPCHHGRCVDGIASFSCACAPGYTGTRCE) enclose the EGF-like 14; calcium-binding domain. The 37-residue stretch at 582 to 618 (QVDECRSQPCRHGGKCLDLVDKYLCRCPSGTTGVNCE) folds into the EGF-like 15; calcium-binding domain. The 36-residue stretch at 620-655 (NIDDCASNPCTFGVCRDGINRYDCVCQPGFTGPLCN) folds into the EGF-like 16; calcium-binding domain. Positions 657 to 693 (EINECASSPCGEGGSCVDGENGFRCLCPPGSLPPLCL) constitute an EGF-like 17; calcium-binding domain. 3 consecutive EGF-like domains span residues 695-730 (PSHP…PRCS), 734-770 (ARDA…RQCE), and 771-808 (LLSP…PRCQ). The 38-residue stretch at 810–847 (DVDECAGPAPCGPHGICTNLAGSFSCTCHGGYTGPSCD) folds into the EGF-like 21; calcium-binding domain. In terms of domain architecture, EGF-like 22; calcium-binding spans 849-885 (DINDCDPNPCLNGGSCQDGVGSFSCSCLPGFAGPRCA). Positions 887–922 (DVDECLSNPCGPGTCTDHVASFTCTCPPGYGGFHCE) constitute an EGF-like 23; calcium-binding domain. 5 EGF-like domains span residues 924 to 960 (DLPD…AHCQ), 962 to 998 (EADP…PQCQ), 1000 to 1034 (LVDW…RLCD), 1036 to 1082 (RSLP…SHCE), and 1084 to 1120 (EVDP…DNCE). The 37-residue stretch at 1122-1158 (DVDECASQPCQHGGSCIDLVARYLCSCPPGTLGVLCE) folds into the EGF-like 29; calcium-binding domain. Residues 1160–1203 (NEDDCGPGPPLDSGPRCLHNGTCVDLVGGFRCTCPPGYTGLRCE) enclose the EGF-like 30; calcium-binding domain. Residue Asn-1179 is glycosylated (N-linked (GlcNAc...) asparagine). 4 consecutive EGF-like domains span residues 1205 to 1244 (DINE…PRCQ), 1246 to 1287 (VLSP…PRCE), 1289 to 1325 (VARS…PSCR), and 1335 to 1373 (SNAS…PRCE). A glycan (N-linked (GlcNAc...) asparagine) is linked at Asn-1336. 12 disulfide bridges follow: Cys-1339–Cys-1350, Cys-1344–Cys-1361, Cys-1363–Cys-1372, Cys-1387–Cys-1410, Cys-1392–Cys-1405, Cys-1401–Cys-1417, Cys-1428–Cys-1451, Cys-1433–Cys-1446, Cys-1442–Cys-1458, Cys-1467–Cys-1493, Cys-1475–Cys-1488, and Cys-1484–Cys-1500. LNR repeat units follow at residues 1387-1427 (CPRA…PWRQ), 1428-1458 (CEAL…NFDC), and 1467-1505 (CNPV…SEVP). N-linked (GlcNAc...) asparagine glycosylation occurs at Asn-1438. Residues 1644–1664 (LPLLVAGAVLLLVILVLGVMV) form a helical membrane-spanning segment. The Cytoplasmic portion of the chain corresponds to 1665 to 2321 (ARRKREHSTL…EVTPKRQVLA (657 aa)). ANK repeat units follow at residues 1838–1867 (TGET…DTNA), 1871–1901 (SGRT…DLDA), 1905–1934 (DGST…DVNA), 1938–1967 (LGKS…NKDM), and 1971–2000 (KEET…NREI). Residues 2024–2120 (LDQPSGPRSP…FGGPPASPGG (97 aa)) form a disordered region. Residues 2039–2053 (LGPLLCPPGAFLPGL) show a composition bias toward low complexity. At Arg-2174 the chain carries Omega-N-methylarginine. The interval 2190-2321 (APGPQLLNPG…EVTPKRQVLA (132 aa)) is disordered. Residues 2269–2289 (STPSPATATGAMATTTGALPA) are compositionally biased toward low complexity. Residues 2296 to 2308 (VPSSLAQAQTQLG) are compositionally biased toward polar residues.

It belongs to the NOTCH family. As to quaternary structure, heterodimer of a C-terminal fragment N(TM) and a N-terminal fragment N(EC) which are probably linked by disulfide bonds. Interacts with MAML1, MAML2 and MAML3 which act as transcriptional coactivators for NOTCH3. Interacts with PSMA1. Interacts with HIF1AN. Post-translationally, synthesized in the endoplasmic reticulum as an inactive form which is proteolytically cleaved by a furin-like convertase in the trans-Golgi network before it reaches the plasma membrane to yield an active, ligand-accessible form. Cleavage results in a C-terminal fragment N(TM) and a N-terminal fragment N(EC). Following ligand binding, it is cleaved by TNF-alpha converting enzyme (TACE) to yield a membrane-associated intermediate fragment called notch extracellular truncation (NEXT). This fragment is then cleaved by presenilin dependent gamma-secretase to release a notch-derived peptide containing the intracellular domain (NICD) from the membrane. In terms of processing, phosphorylated. Hydroxylated by HIF1AN. In terms of tissue distribution, ubiquitously expressed in fetal and adult tissues.

The protein resides in the cell membrane. It localises to the nucleus. In terms of biological role, functions as a receptor for membrane-bound ligands Jagged1, Jagged2 and Delta1 to regulate cell-fate determination. Upon ligand activation through the released notch intracellular domain (NICD) it forms a transcriptional activator complex with RBPJ/RBPSUH and activates genes of the enhancer of split locus. Affects the implementation of differentiation, proliferation and apoptotic programs. The chain is Neurogenic locus notch homolog protein 3 (NOTCH3) from Homo sapiens (Human).